The chain runs to 151 residues: Sperm surface protein Sp17 (151 aa).

2 disordered regions span residues 56–115 (DPAE…EKEE) and 127–151 (GHIAREEAKKMKTNSLQNEEKEENK). A compositionally biased stretch (basic and acidic residues) spans 62–98 (SKVEDRFYNNHAFEEQEPPEKSDPKQEESQISGKEEE). An IQ domain is found at 114–143 (EEVAAVKIQAAFRGHIAREEAKKMKTNSLQ).

Homodimer. May interact with ROPN1. In terms of tissue distribution, testis and sperm specific.

Its subcellular location is the membrane. In terms of biological role, sperm surface zona pellucida binding protein. Helps to bind spermatozoa to the zona pellucida with high affinity. Might function in binding zona pellucida and carbohydrates. This is Sperm surface protein Sp17 (SPA17) from Homo sapiens (Human).